Consider the following 249-residue polypeptide: Expansin-A18 (249 aa).

The first 21 residues, 1–21, serve as a signal peptide directing secretion; it reads MGNIVLQLLAILALCIAPARS. In terms of domain architecture, Expansin-like EG45 spans 41–154; it reads GGACGYGNLY…QQVKCWRSGG (114 aa). Residue N116 is glycosylated (N-linked (GlcNAc...) asparagine). Residues 164 to 243 enclose the Expansin-like CBD domain; that stretch reads YFELVLVTNM…GWSFGQTFST (80 aa).

It belongs to the expansin family. Expansin A subfamily. In terms of tissue distribution, expressed in roots.

Its subcellular location is the secreted. It is found in the cell wall. It localises to the membrane. Functionally, may cause loosening and extension of plant cell walls by disrupting non-covalent bonding between cellulose microfibrils and matrix glucans. No enzymatic activity has been found. May be required for rapid internodal elongation in deepwater rice during submergence. This is Expansin-A18 (EXPA18) from Oryza sativa subsp. japonica (Rice).